The chain runs to 266 residues: Hydroxyethylthiazole kinase (266 aa).

A substrate-binding site is contributed by Met-43. Residues Arg-119 and Thr-166 each coordinate ATP. A substrate-binding site is contributed by Gly-193.

Belongs to the Thz kinase family. It depends on Mg(2+) as a cofactor.

The catalysed reaction is 5-(2-hydroxyethyl)-4-methylthiazole + ATP = 4-methyl-5-(2-phosphooxyethyl)-thiazole + ADP + H(+). It functions in the pathway cofactor biosynthesis; thiamine diphosphate biosynthesis; 4-methyl-5-(2-phosphoethyl)-thiazole from 5-(2-hydroxyethyl)-4-methylthiazole: step 1/1. Its function is as follows. Catalyzes the phosphorylation of the hydroxyl group of 4-methyl-5-beta-hydroxyethylthiazole (THZ). The chain is Hydroxyethylthiazole kinase from Methanococcus maripaludis (strain C6 / ATCC BAA-1332).